A 618-amino-acid polypeptide reads, in one-letter code: 1-deoxy-D-xylulose-5-phosphate synthase (618 aa).

Thiamine diphosphate contacts are provided by residues His-72 and 113–115 (GHA). Asp-144 serves as a coordination point for Mg(2+). Residues 145 to 146 (GA), Asn-173, His-284, and Glu-359 each bind thiamine diphosphate. Asn-173 is a binding site for Mg(2+).

This sequence belongs to the transketolase family. DXPS subfamily. As to quaternary structure, homodimer. Mg(2+) is required as a cofactor. The cofactor is thiamine diphosphate.

The catalysed reaction is D-glyceraldehyde 3-phosphate + pyruvate + H(+) = 1-deoxy-D-xylulose 5-phosphate + CO2. It functions in the pathway metabolic intermediate biosynthesis; 1-deoxy-D-xylulose 5-phosphate biosynthesis; 1-deoxy-D-xylulose 5-phosphate from D-glyceraldehyde 3-phosphate and pyruvate: step 1/1. In terms of biological role, catalyzes the acyloin condensation reaction between C atoms 2 and 3 of pyruvate and glyceraldehyde 3-phosphate to yield 1-deoxy-D-xylulose-5-phosphate (DXP). This Dictyoglomus turgidum (strain DSM 6724 / Z-1310) protein is 1-deoxy-D-xylulose-5-phosphate synthase.